The following is a 230-amino-acid chain: MTATPSDDRKYRHQRERLVETLRERGIHDERVLSAVGAVARHAFVDPALRDRAYADEALPIGLNQTISQPFTVAYQTALLGVQPDDRILEVGTGSGFQAAVLCEMGARVYSIERHDDLLRRARSVLDGLGYDVRTRHGDGTRGWPAFAPYDGIVVTAGAPEIPAPLLHQLREPSGEDDGPGGRLVIPIGGREGQTMTRVRRTGSGPHDYEQEEFHSFRFVPLVDEDEGGG.

Ser-68 is an active-site residue.

Belongs to the methyltransferase superfamily. L-isoaspartyl/D-aspartyl protein methyltransferase family.

Its subcellular location is the cytoplasm. It catalyses the reaction [protein]-L-isoaspartate + S-adenosyl-L-methionine = [protein]-L-isoaspartate alpha-methyl ester + S-adenosyl-L-homocysteine. Functionally, catalyzes the methyl esterification of L-isoaspartyl residues in peptides and proteins that result from spontaneous decomposition of normal L-aspartyl and L-asparaginyl residues. It plays a role in the repair and/or degradation of damaged proteins. The protein is Protein-L-isoaspartate O-methyltransferase of Salinibacter ruber (strain DSM 13855 / M31).